A 1338-amino-acid chain; its full sequence is Nonribosomal peptide synthetase astA (1338 aa).

The segment at 22–52 is disordered; the sequence is IAVVSGDIPSPHPKNEPSQTSTLHIPRDSDL. The segment at 271 to 681 is adenylation; the sequence is FQARCRQNPS…GRKGAEVKLR (411 aa). Residues 820–893 enclose the Carrier domain; it reads TPVEIIIHDA…SLAEKCSAGG (74 aa). Serine 854 carries the post-translational modification O-(pantetheine 4'-phosphoryl)serine. Positions 949-1336 are condensation; it reads TFIFRLSGPV…IIRFLDSPDS (388 aa).

Belongs to the NRP synthetase family.

It catalyses the reaction 7beta,14,16-trihydroxyconfertifolin + benzoate + H(+) = dideacetyl astellolide A + H2O. The catalysed reaction is 7beta,14,16-trihydroxyconfertifolin + 4-hydroxybenzoate + H(+) = dideacetyl astellolide B + H2O. It participates in secondary metabolite biosynthesis; terpenoid biosynthesis. Functionally, nonribosomal peptide synthetase; part of the gene cluster that mediates the biosynthesis of astellolides, drimane-type sesquiterpene esters that show antimicrobial, anti-inflammatory, and anti-tumor activities. The first step in astellolide biosynthesis is performed by the sesquiterpene cyclase astC that catalyzes the formation of drimanyl pyrophosphate from farnesyl pyrophosphate. Drimanyl pyrophosphate is then dephosphorylated by the sesquiterpene phosphatase astI to produce drimanyl monophosphate which is further dephosphorylated to drim-8-ene-11-ol by atsK. Drim-8-ene-11-ol is converted to confertifolin, probably by the cytochrome P450 monooxygenase astD and/or the dehydrogenase astE. The cytochrome P450 monooxygenases astB, astF and astJ then hydroxylate confertifolin at C6, C14, or C15 to form trihydroxy confertifolin. The nonribosomal peptide synthetase astA catalyzes ester bond formation between trihydroxy contifolin and benzoic acid (BA) or 4-hydroxy benzoic acid (4HBA), leading to the formation of dideacetyl astellolides A and B, respectively. Finally, the O-acetyltransferase astG converts dideacetyl astellolides A and B into deacetyl astellolides A and B. This is Nonribosomal peptide synthetase astA from Aspergillus oryzae (strain ATCC 42149 / RIB 40) (Yellow koji mold).